The following is a 509-amino-acid chain: Dihydrolipoyl dehydrogenase, mitochondrial (509 aa).

A mitochondrion-targeting transit peptide spans M1–Y35. N6-acetyllysine; alternate is present on K66. The residue at position 66 (K66) is an N6-succinyllysine; alternate. Residues E71–C80 and K89 each bind FAD. The cysteines at positions 80 and 85 are disulfide-linked. 4 positions are modified to N6-acetyllysine; alternate: K104, K122, K132, and K143. Residues K104, K122, K132, and K143 each carry the N6-succinyllysine; alternate modification. Residue G154 coordinates FAD. N6-succinyllysine is present on residues K159 and K166. T183–S185 is a binding site for FAD. NAD(+) contacts are provided by residues G220–E227 and E243. 2 positions are modified to N6-succinyllysine: K273 and K277. V278 contributes to the NAD(+) binding site. S285 and S297 each carry phosphoserine. G314 provides a ligand contact to NAD(+). An N6-acetyllysine modification is found at K346. FAD contacts are provided by residues D355 and M361 to H364. An N6-acetyllysine; alternate modification is found at K410. K410 bears the N6-succinyllysine; alternate mark. An N6-acetyllysine mark is found at K417 and K420. An N6-succinyllysine modification is found at K430. The active-site Proton acceptor is the H487. At S502 the chain carries Phosphoserine. N6-acetyllysine; alternate is present on K505. K505 carries the N6-succinyllysine; alternate modification.

This sequence belongs to the class-I pyridine nucleotide-disulfide oxidoreductase family. As to quaternary structure, homodimer. Part of the multimeric pyruvate dehydrogenase complex that contains multiple copies of pyruvate dehydrogenase (subunits PDHA (PDHA1 or PDHA2) and PDHB, E1), dihydrolipoamide acetyltransferase (DLAT, E2) and lipoamide dehydrogenase (DLD, E3). These subunits are bound to an inner core composed of about 48 DLAT and 12 PDHX molecules (by non covalent bonds). The 2-oxoglutarate dehydrogenase complex is composed of OGDH (2-oxoglutarate dehydrogenase; E1), DLST (dihydrolipoamide succinyltransferase; E2), DLD (dihydrolipoamide dehydrogenase; E3) and the assembly factor KGD4. It contains multiple copies of the three enzymatic components (E1, E2 and E3). In the nucleus, the 2-oxoglutarate dehydrogenase complex associates with KAT2A. Interacts with PDHX. FAD is required as a cofactor. In terms of processing, tyrosine phosphorylated.

The protein resides in the mitochondrion matrix. It is found in the nucleus. The protein localises to the cell projection. It localises to the cilium. Its subcellular location is the flagellum. The protein resides in the cytoplasmic vesicle. It is found in the secretory vesicle. The protein localises to the acrosome. The enzyme catalyses N(6)-[(R)-dihydrolipoyl]-L-lysyl-[protein] + NAD(+) = N(6)-[(R)-lipoyl]-L-lysyl-[protein] + NADH + H(+). Functionally, lipoamide dehydrogenase is a component of the glycine cleavage system as well as an E3 component of three alpha-ketoacid dehydrogenase complexes (pyruvate-, alpha-ketoglutarate-, and branched-chain amino acid-dehydrogenase complex). The 2-oxoglutarate dehydrogenase complex is mainly active in the mitochondrion. A fraction of the 2-oxoglutarate dehydrogenase complex also localizes in the nucleus and is required for lysine succinylation of histones: associates with KAT2A on chromatin and provides succinyl-CoA to histone succinyltransferase KAT2A. In monomeric form may have additional moonlighting function as serine protease. Involved in the hyperactivation of spermatazoa during capacitation and in the spermatazoal acrosome reaction. In Canis lupus familiaris (Dog), this protein is Dihydrolipoyl dehydrogenase, mitochondrial (DLD).